The primary structure comprises 371 residues: Putative glutamate--cysteine ligase 2 (371 aa).

The protein belongs to the glutamate--cysteine ligase type 2 family. YbdK subfamily.

It catalyses the reaction L-cysteine + L-glutamate + ATP = gamma-L-glutamyl-L-cysteine + ADP + phosphate + H(+). Functionally, ATP-dependent carboxylate-amine ligase which exhibits weak glutamate--cysteine ligase activity. This chain is Putative glutamate--cysteine ligase 2, found in Nitrosospira multiformis (strain ATCC 25196 / NCIMB 11849 / C 71).